The primary structure comprises 224 residues: Small ribosomal subunit protein uS3 (224 aa).

In terms of domain architecture, KH type-2 spans 39–107; sequence IREFLKKKPS…DVWVEIAEVK (69 aa).

The protein belongs to the universal ribosomal protein uS3 family. As to quaternary structure, part of the 30S ribosomal subunit. Forms a tight complex with proteins S10 and S14.

Functionally, binds the lower part of the 30S subunit head. Binds mRNA in the 70S ribosome, positioning it for translation. The polypeptide is Small ribosomal subunit protein uS3 (Chlamydia trachomatis serovar L2 (strain ATCC VR-902B / DSM 19102 / 434/Bu)).